We begin with the raw amino-acid sequence, 164 residues long: Cytochrome c-type biogenesis protein CcmE (164 aa).

At 1–8 the chain is on the cytoplasmic side; it reads MNPRRKSR. Residues 9-29 form a helical; Signal-anchor for type II membrane protein membrane-spanning segment; sequence LYLAMVVLIGISLTTTLVLYA. At 30 to 164 the chain is on the periplasmic side; that stretch reads LRSNIDLFYT…RGTNTTGNAL (135 aa). The heme site is built by His-130 and Tyr-134. The segment at 140–164 is disordered; that stretch reads EEAMKENHSRPAAAYRGTNTTGNAL.

This sequence belongs to the CcmE/CycJ family.

It localises to the cell inner membrane. Its function is as follows. Heme chaperone required for the biogenesis of c-type cytochromes. Transiently binds heme delivered by CcmC and transfers the heme to apo-cytochromes in a process facilitated by CcmF and CcmH. This is Cytochrome c-type biogenesis protein CcmE from Yersinia pseudotuberculosis serotype O:3 (strain YPIII).